The following is a 235-amino-acid chain: Leucyl/phenylalanyl-tRNA--protein transferase (235 aa).

Belongs to the L/F-transferase family.

It is found in the cytoplasm. The enzyme catalyses N-terminal L-lysyl-[protein] + L-leucyl-tRNA(Leu) = N-terminal L-leucyl-L-lysyl-[protein] + tRNA(Leu) + H(+). It carries out the reaction N-terminal L-arginyl-[protein] + L-leucyl-tRNA(Leu) = N-terminal L-leucyl-L-arginyl-[protein] + tRNA(Leu) + H(+). It catalyses the reaction L-phenylalanyl-tRNA(Phe) + an N-terminal L-alpha-aminoacyl-[protein] = an N-terminal L-phenylalanyl-L-alpha-aminoacyl-[protein] + tRNA(Phe). Functions in the N-end rule pathway of protein degradation where it conjugates Leu, Phe and, less efficiently, Met from aminoacyl-tRNAs to the N-termini of proteins containing an N-terminal arginine or lysine. The polypeptide is Leucyl/phenylalanyl-tRNA--protein transferase (Azoarcus sp. (strain BH72)).